We begin with the raw amino-acid sequence, 37 residues long: Cytochrome b6-f complex subunit 5 (37 aa).

The helical transmembrane segment at 5–25 threads the bilayer; the sequence is LLSGIVLGLIPITLAGLFVTA.

This sequence belongs to the PetG family. As to quaternary structure, the 4 large subunits of the cytochrome b6-f complex are cytochrome b6, subunit IV (17 kDa polypeptide, PetD), cytochrome f and the Rieske protein, while the 4 small subunits are PetG, PetL, PetM and PetN. The complex functions as a dimer.

The protein localises to the plastid. Its subcellular location is the chloroplast thylakoid membrane. In terms of biological role, component of the cytochrome b6-f complex, which mediates electron transfer between photosystem II (PSII) and photosystem I (PSI), cyclic electron flow around PSI, and state transitions. PetG is required for either the stability or assembly of the cytochrome b6-f complex. The chain is Cytochrome b6-f complex subunit 5 from Chaetosphaeridium globosum (Charophycean green alga).